A 143-amino-acid chain; its full sequence is Small ribosomal subunit protein bS18m (143 aa).

The protein belongs to the bacterial ribosomal protein bS18 family. In terms of assembly, component of the mitochondrial ribosome small subunit (28S) which comprises a 12S rRNA and about 30 distinct proteins.

It is found in the mitochondrion. This Bos taurus (Bovine) protein is Small ribosomal subunit protein bS18m (MRPS18C).